Here is a 354-residue protein sequence, read N- to C-terminus: G-protein coupled estrogen receptor 1 (354 aa).

At 1-40 the chain is on the extracellular side; sequence MEEQTTSLVWIYVNSTEQLNTSYEYNTTYLIEDSDKYQSY. Residues 41–61 form a helical membrane-spanning segment; the sequence is VIGLFLSCLYTILLFPIGFIG. Topologically, residues 62-81 are cytoplasmic; the sequence is NILILVVNLNHRGKMAIPDL. A helical transmembrane segment spans residues 82–102; that stretch reads YFVNLAVADLILVADSLIEVF. At 103–112 the chain is on the extracellular side; the sequence is NLNEKYYDYA. A helical membrane pass occupies residues 113–133; that stretch reads VLCTFMSLFLQVNMYSSIFFL. Cysteines 115 and 192 form a disulfide. The Cytoplasmic segment spans residues 134-160; that stretch reads TWMSFDRYIALANSMSSSPLRTMQHAK. A helical membrane pass occupies residues 161-181; the sequence is LSCGLIWMASILATLLPFTIV. Residues 182 to 202 are Extracellular-facing; the sequence is QTQHRGEVHFCFANVFEIQWL. Residues 203–223 form a helical membrane-spanning segment; that stretch reads EVTIGFLVPFSIIGLCYSLIG. The Cytoplasmic portion of the chain corresponds to 224–245; sequence RILMRSQKHRGLWPRRQKALRM. The chain crosses the membrane as a helical span at residues 246–266; sequence IVVVVLVFFICWLPENVFISI. Residues 267–292 are Extracellular-facing; it reads QLLQGTADPSQRTATTLRHDYPLTGH. A helical membrane pass occupies residues 293–313; sequence IVNLAAFSNSCLNPIIYSFLG. Residues 314 to 353 are Cytoplasmic-facing; that stretch reads ETFRDKLRLFIKQKASWSVVNRFCHHGLDLHLPVRSEVSE.

The protein belongs to the G-protein coupled receptor 1 family. In terms of assembly, homodimer. Heterodimer. Expressed in oocytes (at protein level). Highly expressed in brain, heart, testis and ovary. Weakly expressed in muscle and intestine.

It is found in the nucleus. The protein localises to the cytoplasm. It localises to the perinuclear region. The protein resides in the cytoskeleton. Its subcellular location is the cytoplasmic vesicle membrane. It is found in the cell membrane. The protein localises to the basolateral cell membrane. It localises to the endoplasmic reticulum membrane. The protein resides in the early endosome. Its subcellular location is the recycling endosome. It is found in the golgi apparatus. The protein localises to the trans-Golgi network. It localises to the golgi apparatus membrane. The protein resides in the cell projection. Its subcellular location is the dendrite. It is found in the dendritic spine membrane. The protein localises to the axon. It localises to the postsynaptic density. The protein resides in the mitochondrion membrane. Functionally, membrane G-protein coupled estrogen receptor that binds to 17-beta-estradiol (E2) with high affinity, leading to rapid and transient activation of numerous intracellular signaling pathways. Plays a role in the embryonic development of sensory and motor neurons. May induce apoptosis and reduce proliferation of brain cells. Involved in maintenance of meiotic arrest in oocytes. The chain is G-protein coupled estrogen receptor 1 (gper1) from Micropogonias undulatus (Atlantic croaker).